The primary structure comprises 194 residues: Ion-translocating oxidoreductase complex subunit B (194 aa).

The hydrophobic stretch occupies residues 1–26 (MSSILIAVIAIAALALVFGLILGFAS). The 4Fe-4S domain occupies 32-90 (ESDPIVEQIDAILPQTQCGQCGYPGCKPYAEAIANGDMINKCPPGGQATIEKLADLMGV). [4Fe-4S] cluster is bound by residues Cys49, Cys52, Cys57, Cys73, Cys114, Cys117, Cys120, Cys124, Cys144, Cys147, Cys150, and Cys154. 4Fe-4S ferredoxin-type domains lie at 105-134 (KVAF…GGTK) and 135-164 (ALHT…MIPV).

This sequence belongs to the 4Fe4S bacterial-type ferredoxin family. RnfB subfamily. In terms of assembly, the complex is composed of six subunits: RnfA, RnfB, RnfC, RnfD, RnfE and RnfG. [4Fe-4S] cluster serves as cofactor.

It localises to the cell inner membrane. Functionally, part of a membrane-bound complex that couples electron transfer with translocation of ions across the membrane. This chain is Ion-translocating oxidoreductase complex subunit B, found in Aliivibrio fischeri (strain ATCC 700601 / ES114) (Vibrio fischeri).